The following is a 265-amino-acid chain: MASSNLLTLALFLVLLTHANSSNDASFNVETFNKTNLILQGDATVSSEGHLLLTNVKGNEEDSMGRAFYSAPIQINDRTIDNLASFSTNFTFRINAKNIENSAYGLAFALVPVGSRPKLKGRYLGLFNTTNYDRDAHTVAVVFDTVSNRIEIDVNSIRPIATESCNFGHNNGEKAEVRITYDSPKNDLRVSLLYPSSEEKCHVSATVPLEKEVEDWVSVGFSATSGSKKETTETHNVLSWSFSSNFINFKGKKSERSNILLNKIL.

A signal peptide spans 1-21 (MASSNLLTLALFLVLLTHANS). 3 N-linked (GlcNAc...) asparagine glycosylation sites follow: Asn33, Asn89, and Asn128. The cysteines at positions 165 and 201 are disulfide-linked.

This sequence belongs to the leguminous lectin family. In terms of assembly, homodimer.

Its function is as follows. Seed storage. This carbohydrate-binding lectin has toxic effects on an important bean bruchid pest, Z.subfasciatus. Antibiosis properties of legume lectins are proposed to be due to the lysis of epithelial cells of the intestine by binding to the carbohydrate moieties of these proteins. The chain is Arcelin-1 (ARC1) from Phaseolus vulgaris (Kidney bean).